A 172-amino-acid chain; its full sequence is Protein-export protein SecB (172 aa).

The segment at 1 to 22 (MADETSADINNPALQPNGEDTS) is disordered. Polar residues predominate over residues 7–20 (ADINNPALQPNGED).

This sequence belongs to the SecB family. Homotetramer, a dimer of dimers. One homotetramer interacts with 1 SecA dimer.

Its subcellular location is the cytoplasm. Its function is as follows. One of the proteins required for the normal export of preproteins out of the cell cytoplasm. It is a molecular chaperone that binds to a subset of precursor proteins, maintaining them in a translocation-competent state. It also specifically binds to its receptor SecA. The sequence is that of Protein-export protein SecB from Sphingopyxis alaskensis (strain DSM 13593 / LMG 18877 / RB2256) (Sphingomonas alaskensis).